Consider the following 280-residue polypeptide: Tryptophan synthase alpha chain (280 aa).

Residues glutamate 49 and aspartate 60 each act as proton acceptor in the active site.

Belongs to the TrpA family. In terms of assembly, tetramer of two alpha and two beta chains.

It catalyses the reaction (1S,2R)-1-C-(indol-3-yl)glycerol 3-phosphate + L-serine = D-glyceraldehyde 3-phosphate + L-tryptophan + H2O. It participates in amino-acid biosynthesis; L-tryptophan biosynthesis; L-tryptophan from chorismate: step 5/5. Functionally, the alpha subunit is responsible for the aldol cleavage of indoleglycerol phosphate to indole and glyceraldehyde 3-phosphate. The chain is Tryptophan synthase alpha chain from Corynebacterium glutamicum (strain ATCC 13032 / DSM 20300 / JCM 1318 / BCRC 11384 / CCUG 27702 / LMG 3730 / NBRC 12168 / NCIMB 10025 / NRRL B-2784 / 534).